Consider the following 363-residue polypeptide: Histidinol-phosphate aminotransferase (363 aa).

The residue at position 215 (Lys215) is an N6-(pyridoxal phosphate)lysine.

The protein belongs to the class-II pyridoxal-phosphate-dependent aminotransferase family. Histidinol-phosphate aminotransferase subfamily. As to quaternary structure, homodimer. Pyridoxal 5'-phosphate serves as cofactor.

It catalyses the reaction L-histidinol phosphate + 2-oxoglutarate = 3-(imidazol-4-yl)-2-oxopropyl phosphate + L-glutamate. It participates in amino-acid biosynthesis; L-histidine biosynthesis; L-histidine from 5-phospho-alpha-D-ribose 1-diphosphate: step 7/9. This chain is Histidinol-phosphate aminotransferase, found in Buchnera aphidicola subsp. Diuraphis noxia.